Consider the following 121-residue polypeptide: Flagellar protein FliT (121 aa).

The required for homodimerization stretch occupies residues 1 to 50 (MNHAPHLYFAWQQLVEKSQLMLRLATEEQWDELIASEMAYVNAVQEIAHL). A fliD binding region spans residues 60 to 98 (MQEQLRPMLRLILDNESKVKQLLQIRMDELAKLVGQSSV).

The protein belongs to the FliT family. As to quaternary structure, homodimer. Interacts with FliD and FlhC.

The protein localises to the cytoplasm. The protein resides in the cytosol. Dual-function protein that regulates the transcription of class 2 flagellar operons and that also acts as an export chaperone for the filament-capping protein FliD. As a transcriptional regulator, acts as an anti-FlhDC factor; it directly binds FlhC, thus inhibiting the binding of the FlhC/FlhD complex to class 2 promoters, resulting in decreased expression of class 2 flagellar operons. As a chaperone, effects FliD transition to the membrane by preventing its premature polymerization, and by directing it to the export apparatus. The protein is Flagellar protein FliT of Escherichia coli O8 (strain IAI1).